Here is a 355-residue protein sequence, read N- to C-terminus: Protein HGH1 homolog (355 aa).

A disordered region spans residues 324 to 355 (DEEGDPTPEEIEQMNKKQKLEDEDAQFETDEI). Acidic residues-rich tracts occupy residues 325 to 335 (EEGDPTPEEIE) and 344 to 355 (EDEDAQFETDEI).

The protein belongs to the HGH1 family.

The polypeptide is Protein HGH1 homolog (Dictyostelium discoideum (Social amoeba)).